Consider the following 93-residue polypeptide: YcgL domain-containing protein Shal_1837 (93 aa).

Residues 1–85 form the YcgL domain; sequence MICAVYKSRR…PVVNLLEQHK (85 aa).

The protein is YcgL domain-containing protein Shal_1837 of Shewanella halifaxensis (strain HAW-EB4).